Reading from the N-terminus, the 302-residue chain is Polyamine aminopropyltransferase (302 aa).

One can recognise a PABS domain in the interval 4 to 239 (WTWHLEWQTP…GLWGFIYASD (236 aa)). Gln-33 is a binding site for S-methyl-5'-thioadenosine. Spermidine contacts are provided by His-64 and Glu-88. Residues Asp-108 and 140–141 (DG) each bind S-methyl-5'-thioadenosine. The active-site Proton acceptor is Asp-158. Residue Pro-167 participates in S-methyl-5'-thioadenosine binding.

This sequence belongs to the spermidine/spermine synthase family. In terms of assembly, homodimer or homotetramer.

Its subcellular location is the cytoplasm. The catalysed reaction is S-adenosyl 3-(methylsulfanyl)propylamine + putrescine = S-methyl-5'-thioadenosine + spermidine + H(+). It participates in amine and polyamine biosynthesis; spermidine biosynthesis; spermidine from putrescine: step 1/1. In terms of biological role, catalyzes the irreversible transfer of a propylamine group from the amino donor S-adenosylmethioninamine (decarboxy-AdoMet) to putrescine (1,4-diaminobutane) to yield spermidine. The protein is Polyamine aminopropyltransferase of Sulfolobus acidocaldarius (strain ATCC 33909 / DSM 639 / JCM 8929 / NBRC 15157 / NCIMB 11770).